A 132-amino-acid polypeptide reads, in one-letter code: NADPH-dependent 7-cyano-7-deazaguanine reductase (132 aa).

Residue Cys43 is the Thioimide intermediate of the active site. Catalysis depends on Asp50, which acts as the Proton donor. Residues 65–67 (VEL) and 84–85 (HE) contribute to the substrate site.

This sequence belongs to the GTP cyclohydrolase I family. QueF type 1 subfamily.

It localises to the cytoplasm. The enzyme catalyses 7-aminomethyl-7-carbaguanine + 2 NADP(+) = 7-cyano-7-deazaguanine + 2 NADPH + 3 H(+). The protein operates within tRNA modification; tRNA-queuosine biosynthesis. In terms of biological role, catalyzes the NADPH-dependent reduction of 7-cyano-7-deazaguanine (preQ0) to 7-aminomethyl-7-deazaguanine (preQ1). In Thermosynechococcus vestitus (strain NIES-2133 / IAM M-273 / BP-1), this protein is NADPH-dependent 7-cyano-7-deazaguanine reductase.